We begin with the raw amino-acid sequence, 127 residues long: MKRIFYKHRKRRAPVFKEPEHGYQSLPELVLVPAQPLVCLGDYRTPDPGGLFPWSLRLMMPGAWTKLPGDGGSVPEKGKHGILGAQGQEHPGLNVSSPFSSPWTCYLSGHQPQNNNSPELQVKEILL.

The segment at 69–94 (GDGGSVPEKGKHGILGAQGQEHPGLN) is disordered.

This is an uncharacterized protein from Homo sapiens (Human).